The sequence spans 326 residues: tRNA-modifying protein YgfZ (326 aa).

Folate is bound by residues W27 and W189.

The protein belongs to the tRNA-modifying YgfZ family.

Its subcellular location is the cytoplasm. Folate-binding protein involved in regulating the level of ATP-DnaA and in the modification of some tRNAs. It is probably a key factor in regulatory networks that act via tRNA modification, such as initiation of chromosomal replication. The chain is tRNA-modifying protein YgfZ from Escherichia coli O7:K1 (strain IAI39 / ExPEC).